The sequence spans 427 residues: MLDIKLFRNDPEFLKEKVAKRGMDSKVVDEVLELDEQRRQLISQAEEMKAERNKVSGEIAQKKRNKEDADDAIAAMRNLGDEIKVLDDTLNQVDVDLNDKLSRIPNIIHDDVPEGATDEDNIEVKRWGTPRTFEFEDKAHWDLVEELEMVDFERAAKVSGARFVFLTGDGAQLERALMNYMITKHTTQHGYTEMMVPQLVNADSMYGTGQLPKFEEDLFKVEKEGLYTIPTAEVPLTNYYRNEIIAPDVLPAKFTAQSACYRSEAGSAGRDTRGLIRLHQFDKVEMVRIEKPEDSWQALEDMTHHAEAILEELGLPYRRVILCTGDIGFGSSKTYDLEVWLPSYNDYKEISSCSNITDFQARRSNIRFKRDKNAKPELAHTLNGSGLAVGRTFAAIVENYQNEDGSVTIPEVLVPFMGGKTVIRPTK.

T231–E233 provides a ligand contact to L-serine. R262–E264 contacts ATP. L-serine is bound at residue E285. E349–S352 is a binding site for ATP. Residue S385 coordinates L-serine.

This sequence belongs to the class-II aminoacyl-tRNA synthetase family. Type-1 seryl-tRNA synthetase subfamily. As to quaternary structure, homodimer. The tRNA molecule binds across the dimer.

It localises to the cytoplasm. It catalyses the reaction tRNA(Ser) + L-serine + ATP = L-seryl-tRNA(Ser) + AMP + diphosphate + H(+). The enzyme catalyses tRNA(Sec) + L-serine + ATP = L-seryl-tRNA(Sec) + AMP + diphosphate + H(+). It functions in the pathway aminoacyl-tRNA biosynthesis; selenocysteinyl-tRNA(Sec) biosynthesis; L-seryl-tRNA(Sec) from L-serine and tRNA(Sec): step 1/1. Its function is as follows. Catalyzes the attachment of serine to tRNA(Ser). Is also able to aminoacylate tRNA(Sec) with serine, to form the misacylated tRNA L-seryl-tRNA(Sec), which will be further converted into selenocysteinyl-tRNA(Sec). In Staphylococcus saprophyticus subsp. saprophyticus (strain ATCC 15305 / DSM 20229 / NCIMB 8711 / NCTC 7292 / S-41), this protein is Serine--tRNA ligase.